The chain runs to 76 residues: Defensin-like protein 163 (76 aa).

The N-terminal stretch at 1-27 (MAKLIYSYLFISMFVLSVLLALPNAEG) is a signal peptide. 4 cysteine pairs are disulfide-bonded: Cys-33–Cys-76, Cys-43–Cys-62, Cys-48–Cys-70, and Cys-52–Cys-72.

This sequence belongs to the DEFL family.

It localises to the secreted. This is Defensin-like protein 163 (LCR24) from Arabidopsis thaliana (Mouse-ear cress).